A 202-amino-acid polypeptide reads, in one-letter code: MYTVMLDLKGRSVLVVGGGTIATRRIKGFLQEGAAITVVAPTVSAEINEWEAKGQLRVKRKKVGEEDLLNVFFIVVATNDQAVNKFVKQHIKNDQLVNMASSFSDGNIQIPAQFSRGRLSLAISTDGASPLLTKRIKEDLSSNYDESYTQYTQFLYECRVLIHRLNVSKSRKHELLTEIIDDQYRLSLVKQREFLQQIEKYK.

NAD(+) contacts are provided by residues 20–21 (TI) and 41–42 (PT).

This sequence belongs to the precorrin-2 dehydrogenase / sirohydrochlorin ferrochelatase family. Homodimer.

The enzyme catalyses precorrin-2 + NAD(+) = sirohydrochlorin + NADH + 2 H(+). Its pathway is cofactor biosynthesis; adenosylcobalamin biosynthesis; sirohydrochlorin from precorrin-2: step 1/1. It functions in the pathway porphyrin-containing compound metabolism; siroheme biosynthesis; sirohydrochlorin from precorrin-2: step 1/1. Catalyzes the dehydrogenation of precorrin-2 to form sirohydrochlorin which is used as a precursor in both siroheme biosynthesis and in the anaerobic branch of adenosylcobalamin biosynthesis. It is unable to oxidize precorrin-3. The chain is Precorrin-2 dehydrogenase (sirC) from Priestia megaterium (Bacillus megaterium).